A 159-amino-acid chain; its full sequence is ATP synthase subunit b (159 aa).

Residues N2–V22 traverse the membrane as a helical segment.

The protein belongs to the ATPase B chain family. As to quaternary structure, F-type ATPases have 2 components, F(1) - the catalytic core - and F(0) - the membrane proton channel. F(1) has five subunits: alpha(3), beta(3), gamma(1), delta(1), epsilon(1). F(0) has three main subunits: a(1), b(2) and c(10-14). The alpha and beta chains form an alternating ring which encloses part of the gamma chain. F(1) is attached to F(0) by a central stalk formed by the gamma and epsilon chains, while a peripheral stalk is formed by the delta and b chains.

Its subcellular location is the cell membrane. F(1)F(0) ATP synthase produces ATP from ADP in the presence of a proton or sodium gradient. F-type ATPases consist of two structural domains, F(1) containing the extramembraneous catalytic core and F(0) containing the membrane proton channel, linked together by a central stalk and a peripheral stalk. During catalysis, ATP synthesis in the catalytic domain of F(1) is coupled via a rotary mechanism of the central stalk subunits to proton translocation. Functionally, component of the F(0) channel, it forms part of the peripheral stalk, linking F(1) to F(0). This is ATP synthase subunit b from Clostridium botulinum (strain Loch Maree / Type A3).